The primary structure comprises 163 residues: Choriogonadotropin subunit beta (163 aa).

The first 20 residues, 1–20, serve as a signal peptide directing secretion; that stretch reads MEMLQGLLLCLLLSTGGAWA. Cystine bridges form between Cys29/Cys76, Cys43/Cys91, Cys46/Cys129, Cys54/Cys107, Cys58/Cys109, and Cys112/Cys119. Asn50 is a glycosylation site (N-linked (GlcNAc...) asparagine). The N-linked (GlcNAc...) asparagine glycan is linked to Asn124. Over residues 135-151 the composition is skewed to polar residues; it reads QDSSSNVPPSNLTSPSQ. The interval 135-163 is disordered; that stretch reads QDSSSNVPPSNLTSPSQLLEPAVTPLVPQ. Residue Ser139 is glycosylated (O-linked (GalNAc...) serine). Asn145 carries an N-linked (GlcNAc...) asparagine glycan. Residue Ser150 is glycosylated (O-linked (GalNAc...) serine).

This sequence belongs to the glycoprotein hormones subunit beta family. As to quaternary structure, heterodimer of a common alpha chain and a unique beta chain which confers biological specificity to thyrotropin, lutropin, follitropin and gonadotropin.

The protein resides in the secreted. Stimulates the ovaries to synthesize the steroids that are essential for the maintenance of pregnancy. The protein is Choriogonadotropin subunit beta (CGB) of Saimiri boliviensis boliviensis (Bolivian squirrel monkey).